The primary structure comprises 58 residues: uncharacterized protein (58 aa).

Its subcellular location is the plastid. The protein localises to the chloroplast. This is an uncharacterized protein from Porphyra purpurea (Red seaweed).